Here is a 37-residue protein sequence, read N- to C-terminus: Large ribosomal subunit protein bL36c (37 aa).

It belongs to the bacterial ribosomal protein bL36 family.

The protein resides in the plastid. It localises to the chloroplast. This Adiantum capillus-veneris (Maidenhair fern) protein is Large ribosomal subunit protein bL36c.